We begin with the raw amino-acid sequence, 73 residues long: uncharacterized protein (73 aa).

The next 2 helical transmembrane spans lie at 10–30 (ILLA…YVSA) and 42–62 (YSTV…IYLI).

It is found in the cell membrane. This is an uncharacterized protein from Archaeoglobus fulgidus (strain ATCC 49558 / DSM 4304 / JCM 9628 / NBRC 100126 / VC-16).